Consider the following 176-residue polypeptide: Inorganic pyrophosphatase (176 aa).

Residues K30, R44, and Y56 each contribute to the substrate site. The Mg(2+) site is built by D66, D71, and D103. Y142 is a substrate binding site.

Belongs to the PPase family. In terms of assembly, homohexamer. Mg(2+) is required as a cofactor.

It is found in the cytoplasm. It catalyses the reaction diphosphate + H2O = 2 phosphate + H(+). Catalyzes the hydrolysis of inorganic pyrophosphate (PPi) forming two phosphate ions. This Escherichia coli O157:H7 protein is Inorganic pyrophosphatase.